A 261-amino-acid polypeptide reads, in one-letter code: MTFLAKILEEKQTEVNSRKQEKIDFGSRNIPVHSFIQLINQASSLSIIAEIKRASPSKGEIQMDIDPVEQAIKYEQAGASAISVLTDQRFFKGSLNDLQQVSEAVSIPVLCKDFIIDEIQIDDAKDAGASIILLILAALPLERFQELYNYATKQGLEVICEVHTAEELKNALTISPAIIGINNRNLKSFDVDLQTTKQLAQRVDTNKTIIISESGMRTASDATLAAESGAKAILVGETFMRSNQLETDFNNLRVPLVERSI.

Belongs to the TrpC family.

It catalyses the reaction 1-(2-carboxyphenylamino)-1-deoxy-D-ribulose 5-phosphate + H(+) = (1S,2R)-1-C-(indol-3-yl)glycerol 3-phosphate + CO2 + H2O. It functions in the pathway amino-acid biosynthesis; L-tryptophan biosynthesis; L-tryptophan from chorismate: step 4/5. This chain is Indole-3-glycerol phosphate synthase, found in Oceanobacillus iheyensis (strain DSM 14371 / CIP 107618 / JCM 11309 / KCTC 3954 / HTE831).